The primary structure comprises 727 residues: Prolyl endopeptidase-like (727 aa).

Active-site charge relay system residues include Ser559, Asp645, and His690.

The protein belongs to the peptidase S9A family. As to quaternary structure, homodimer. Interacts with the AP-1 complex.

The protein localises to the cytoplasm. It localises to the cytosol. It is found in the golgi apparatus. Its subcellular location is the trans-Golgi network. The protein resides in the cytoskeleton. The protein localises to the nucleus. Serine peptidase whose precise substrate specificity remains unclear. Does not cleave peptides after a arginine or lysine residue. Regulates trans-Golgi network morphology and sorting by regulating the membrane binding of the AP-1 complex. May play a role in the regulation of synaptic vesicle exocytosis. The polypeptide is Prolyl endopeptidase-like (PREPL) (Pongo abelii (Sumatran orangutan)).